Here is a 107-residue protein sequence, read N- to C-terminus: MDFIRCHVAMQIINFKALEIDKRSLLGILVIKNIKNLHRSNQLLTRLSDLMVPSVIHNGEFVMRNDKSDKLWIFVGESWASLDLEDLNGVRENVFNISKTVPLLIQG.

This is Protein beta (beta) from Bovine ephemeral fever virus (strain BB7721) (BEFV).